The chain runs to 1186 residues: ATP-dependent helicase/deoxyribonuclease subunit B (1186 aa).

The protein belongs to the helicase family. AddB/RexB type 2 subfamily. Heterodimer of AddA and RexB. Mg(2+) is required as a cofactor.

In terms of biological role, the heterodimer acts as both an ATP-dependent DNA helicase and an ATP-dependent, dual-direction single-stranded exonuclease. Recognizes the chi site generating a DNA molecule suitable for the initiation of homologous recombination. This subunit has 5' -&gt; 3' nuclease activity but not helicase activity. The protein is ATP-dependent helicase/deoxyribonuclease subunit B of Latilactobacillus sakei subsp. sakei (strain 23K) (Lactobacillus sakei subsp. sakei).